The following is a 560-amino-acid chain: ATP synthase subunit beta, mitochondrial (560 aa).

The transit peptide at 1-54 (MASRRLLASLLRQSAQRGGGLISRSLGNSIPKSASRASSRASPKGFLLNRAVQY) directs the protein to the mitochondrion. Disordered stretches follow at residues 20–44 (GLIS…ASPK) and 58–81 (AAAP…KITD). Low complexity-rich tracts occupy residues 33-42 (SASRASSRAS) and 58-71 (AAAP…PPKS). Residue 235–242 (GGAGVGKT) coordinates ATP.

This sequence belongs to the ATPase alpha/beta chains family. In terms of assembly, F-type ATPases have 2 components, CF(1) - the catalytic core - and CF(0) - the membrane proton channel. CF(1) has five subunits: alpha(3), beta(3), gamma(1), delta(1), epsilon(1). CF(0) has three main subunits: a, b and c.

It localises to the mitochondrion. It is found in the mitochondrion inner membrane. The enzyme catalyses ATP + H2O + 4 H(+)(in) = ADP + phosphate + 5 H(+)(out). Mitochondrial membrane ATP synthase (F(1)F(0) ATP synthase or Complex V) produces ATP from ADP in the presence of a proton gradient across the membrane which is generated by electron transport complexes of the respiratory chain. F-type ATPases consist of two structural domains, F(1) - containing the extramembraneous catalytic core, and F(0) - containing the membrane proton channel, linked together by a central stalk and a peripheral stalk. During catalysis, ATP synthesis in the catalytic domain of F(1) is coupled via a rotary mechanism of the central stalk subunits to proton translocation. Subunits alpha and beta form the catalytic core in F(1). Rotation of the central stalk against the surrounding alpha(3)beta(3) subunits leads to hydrolysis of ATP in three separate catalytic sites on the beta subunits. This Nicotiana plumbaginifolia (Leadwort-leaved tobacco) protein is ATP synthase subunit beta, mitochondrial (ATPB).